The sequence spans 483 residues: MESERDMYRQFQDWCLRTYGDSGKTKTVTRKKYERIVQLLNGSESSSTDNAKFKFWVKSKGFQLGQPDEVRGGGGGAKQVLFVRVKTTDGVGVDEKLSLRRVAVVEDFFDIIYSMHVETGPNGEQIRKHAGQKRTYKAISESYAFLPREAVTRFLMSCSECQKRMHLNPDGTDHKDNGKPPTLVTSMIDYNMPITMAYMKHMKLQLLNSQQDEDESSIESDEFDMSDSTRMSAVNSDLSSNLEERMQSPQTVHGQQDDDSAAESSNGNETLGHSSAASGGAHGREPEDSSSDGKTGLEQEEQPLNLSDSPSSAQLTSEFRIDDQGSDGKNKYKNLLISDLKMEREARENGSKSPAHSYSSYDSGKNESVDRGAEDLSLNRGDEDEDEHDEHEDSEKVNETDGVEAERLKAFNSRPIPSHLTSAVAESILASACESESRNAAKRMRLDKAQDEAAPADKQCKPEAAQATYSTATVPGSQEDPQI.

Disordered regions lie at residues 210–418 (QQDE…PIPS) and 435–483 (SESR…DPQI). Acidic residues predominate over residues 211–225 (QDEDESSIESDEFDM). Polar residues-rich tracts occupy residues 229–254 (TRMSAVNSDLSSNLEERMQSPQTVHG), 262–271 (AESSNGNETL), and 302–317 (QPLNLSDSPSSAQLTS). Composition is skewed to basic and acidic residues over residues 319–330 (FRIDDQGSDGKN) and 340–350 (LKMEREARENG). Residues 351–363 (SKSPAHSYSSYDS) show a composition bias toward polar residues. 3 stretches are compositionally biased toward basic and acidic residues: residues 364 to 374 (GKNESVDRGAE), 391 to 409 (HEDSEKVNETDGVEAERLK), and 435 to 451 (SESRNAAKRMRLDKAQD). Positions 467-483 (ATYSTATVPGSQEDPQI) are enriched in polar residues.

Its subcellular location is the nucleus. It is found in the nucleolus. The polypeptide is Nucleolar protein 4 (Nol4) (Mus musculus (Mouse)).